The chain runs to 207 residues: Small ribosomal subunit protein uS4 (207 aa).

A disordered region spans residues lysine 31 to glycine 53. One can recognise an S4 RNA-binding domain in the interval cysteine 97 to valine 157.

This sequence belongs to the universal ribosomal protein uS4 family. In terms of assembly, part of the 30S ribosomal subunit. Contacts protein S5. The interaction surface between S4 and S5 is involved in control of translational fidelity.

One of the primary rRNA binding proteins, it binds directly to 16S rRNA where it nucleates assembly of the body of the 30S subunit. Its function is as follows. With S5 and S12 plays an important role in translational accuracy. In Acidovorax ebreus (strain TPSY) (Diaphorobacter sp. (strain TPSY)), this protein is Small ribosomal subunit protein uS4.